Reading from the N-terminus, the 198-residue chain is Holliday junction branch migration complex subunit RuvA (198 aa).

A domain I region spans residues 1–64; the sequence is MYEYIKGEYM…EDFIGLYGFE (64 aa). The interval 65 to 143 is domain II; sequence SLEELEMFKM…TDELLNCIDE (79 aa). The interval 144–154 is flexible linker; sequence FDDVTQDNSLA. The interval 154-198 is domain III; it reads AVSEALSALISLGYTEKEAEKVLRDVDKSESVENIIKSALVKLMG.

This sequence belongs to the RuvA family. In terms of assembly, homotetramer. Forms an RuvA(8)-RuvB(12)-Holliday junction (HJ) complex. HJ DNA is sandwiched between 2 RuvA tetramers; dsDNA enters through RuvA and exits via RuvB. An RuvB hexamer assembles on each DNA strand where it exits the tetramer. Each RuvB hexamer is contacted by two RuvA subunits (via domain III) on 2 adjacent RuvB subunits; this complex drives branch migration. In the full resolvosome a probable DNA-RuvA(4)-RuvB(12)-RuvC(2) complex forms which resolves the HJ.

The protein localises to the cytoplasm. In terms of biological role, the RuvA-RuvB-RuvC complex processes Holliday junction (HJ) DNA during genetic recombination and DNA repair, while the RuvA-RuvB complex plays an important role in the rescue of blocked DNA replication forks via replication fork reversal (RFR). RuvA specifically binds to HJ cruciform DNA, conferring on it an open structure. The RuvB hexamer acts as an ATP-dependent pump, pulling dsDNA into and through the RuvAB complex. HJ branch migration allows RuvC to scan DNA until it finds its consensus sequence, where it cleaves and resolves the cruciform DNA. The protein is Holliday junction branch migration complex subunit RuvA of Clostridium botulinum (strain Eklund 17B / Type B).